The following is a 339-amino-acid chain: Glyceraldehyde-3-phosphate dehydrogenase (339 aa).

Residues 12–13, aspartate 34, and lysine 79 each bind NAD(+); that span reads RI. D-glyceraldehyde 3-phosphate-binding positions include 150–152, threonine 181, 210–211, and arginine 233; these read SCT and TG. Residue cysteine 151 is the Nucleophile of the active site. Asparagine 316 serves as a coordination point for NAD(+).

The protein belongs to the glyceraldehyde-3-phosphate dehydrogenase family. Homotetramer.

The protein localises to the cytoplasm. The catalysed reaction is D-glyceraldehyde 3-phosphate + phosphate + NAD(+) = (2R)-3-phospho-glyceroyl phosphate + NADH + H(+). The protein operates within carbohydrate degradation; glycolysis; pyruvate from D-glyceraldehyde 3-phosphate: step 1/5. In Cryptococcus neoformans var. neoformans serotype D (strain B-3501A) (Filobasidiella neoformans), this protein is Glyceraldehyde-3-phosphate dehydrogenase (GPD).